Here is a 405-residue protein sequence, read N- to C-terminus: Elongation factor Tu (405 aa).

Residues 10-213 form the tr-type G domain; the sequence is KEHVNVGTIG…AMDEYIPTPE (204 aa). The interval 19–26 is G1; sequence GHVDHGKS. 19–26 is a binding site for GTP; the sequence is GHVDHGKS. S26 is a binding site for Mg(2+). The segment at 64–68 is G2; the sequence is GITIN. The interval 85–88 is G3; it reads DCPG. GTP is bound by residues 85–89 and 140–143; these read DCPGH and NKCD. The tract at residues 140-143 is G4; that stretch reads NKCD. Positions 178–180 are G5; sequence SAL.

The protein belongs to the TRAFAC class translation factor GTPase superfamily. Classic translation factor GTPase family. EF-Tu/EF-1A subfamily. In terms of assembly, monomer.

Its subcellular location is the cytoplasm. The enzyme catalyses GTP + H2O = GDP + phosphate + H(+). Its function is as follows. GTP hydrolase that promotes the GTP-dependent binding of aminoacyl-tRNA to the A-site of ribosomes during protein biosynthesis. The sequence is that of Elongation factor Tu from Aquifex pyrophilus.